The primary structure comprises 398 residues: MQKRLTLLGSTGSIGDSTLDVVARHPERFSVYALTAHRNGDKLVEQCLRFAPEVAVVGDAATAAHVDAKLRAAGSKTVVLHGPQALVDVSKSDGCDTVVAAIVGAAGLAPSLAAARAGKRILLANKEALVMSGAIFMDAVRDHGAILLPVDSEHNAIFQCMPRDAAEHGGISKIILTASGGPFRTREPATLVDVTPDEACKHPNWVMGRKISVDSATMMNKGLEVIEAHWIFGLPGDRIDVLIHPQSVIHSLVSYRDGSVLAQLGNPDMRTPIAHALAFPERVDAGVDQLDLAQIAQLSFEKPDYARFPCLALALKALEEGGIASAALNAANEVAVEAFLERRIGFMAIAATVDAVLNTLPNRAPDGLDDVLAADAEARRLAAAIIAKAPAPRVERTV.

Residues Thr11, Gly12, Ser13, Ile14, Arg38, Asn39, and Asn125 each coordinate NADPH. A 1-deoxy-D-xylulose 5-phosphate-binding site is contributed by Lys126. Glu127 contributes to the NADPH binding site. Mn(2+) is bound at residue Asp151. Ser152, Glu153, Ser179, and His202 together coordinate 1-deoxy-D-xylulose 5-phosphate. Glu153 contributes to the Mn(2+) binding site. Gly208 contributes to the NADPH binding site. Positions 215, 220, 221, and 224 each coordinate 1-deoxy-D-xylulose 5-phosphate. Residue Glu224 participates in Mn(2+) binding.

The protein belongs to the DXR family. Mg(2+) serves as cofactor. It depends on Mn(2+) as a cofactor.

The catalysed reaction is 2-C-methyl-D-erythritol 4-phosphate + NADP(+) = 1-deoxy-D-xylulose 5-phosphate + NADPH + H(+). Its pathway is isoprenoid biosynthesis; isopentenyl diphosphate biosynthesis via DXP pathway; isopentenyl diphosphate from 1-deoxy-D-xylulose 5-phosphate: step 1/6. Its function is as follows. Catalyzes the NADPH-dependent rearrangement and reduction of 1-deoxy-D-xylulose-5-phosphate (DXP) to 2-C-methyl-D-erythritol 4-phosphate (MEP). The chain is 1-deoxy-D-xylulose 5-phosphate reductoisomerase from Burkholderia cenocepacia (strain HI2424).